Here is a 614-residue protein sequence, read N- to C-terminus: Sodium- and chloride-dependent betaine transporter (614 aa).

The Cytoplasmic segment spans residues 1 to 44 (MDGKVAVQECGPPAVSWVPEEGEKLDQEDEDQVKDRGQWTNKME). The next 3 membrane-spanning stretches (helical) occupy residues 45 to 65 (FVLS…FPYL), 73 to 92 (AFFI…VFFL), and 117 to 137 (GIGL…IIIL). At 138–210 (AWALFYLFSS…SGIHDLGSLR (73 aa)) the chain is on the extracellular side. A disulfide bridge links Cys-157 with Cys-166. N-linked (GlcNAc...) asparagine glycosylation is found at Asn-171 and Asn-183. 9 consecutive transmembrane segments (helical) span residues 211–229 (WELA…FCIW), 238–255 (VVYF…ILLI), 291–308 (IFFS…LGSY), 320–341 (IALC…FSIL), 374–393 (MPLS…FLGL), 423–441 (LLIL…FLVT), 458–478 (GICL…VYGA), 499–518 (ISWL…FSLS), and 538–556 (IGWF…FVVI). The Cytoplasmic segment spans residues 557–614 (TLLKTRGPFRKRLRQLITPDSSLPQPKQHPCLDGSAGRNFGPSPTREGLIAGEKETHL). Residues 576–614 (DSSLPQPKQHPCLDGSAGRNFGPSPTREGLIAGEKETHL) form a disordered region.

The protein belongs to the sodium:neurotransmitter symporter (SNF) (TC 2.A.22) family. SLC6A12 subfamily. As to quaternary structure, interacts with LIN7C. As to expression, expressed in kidney, liver, heart, skeletal muscle, placenta, and a widespread distribution in the brain.

It is found in the basolateral cell membrane. Its subcellular location is the cell membrane. The catalysed reaction is 4-aminobutanoate(out) + chloride(out) + 3 Na(+)(out) = 4-aminobutanoate(in) + chloride(in) + 3 Na(+)(in). It carries out the reaction glycine betaine(out) + 2 chloride(out) + 3 Na(+)(out) = glycine betaine(in) + 2 chloride(in) + 3 Na(+)(in). Functionally, transporter that mediates cellular uptake of betaine and GABA in a sodium- and chloride-dependent process. May have a role in regulation of GABAergic transmission in the brain through the reuptake of GABA into presynaptic terminals, as well as in osmotic regulation. Probably also involved in renal and hepatic osmotic regulation. This chain is Sodium- and chloride-dependent betaine transporter, found in Homo sapiens (Human).